The sequence spans 273 residues: MSLILAIYGKGGIGKSTTSANLSAAMALKGAKVLQIGCDPKHDSTFPLTGHLQPTVIDVLDSVNFHLEDVSKEDVIRTGFAGVDTLESGGPPAGSGCGGYVVGETVKLLKEFGLYDKYDVIVFDVLGDVVCGGFSAPLNYADYGLIIACNDFDSIFAANRLCLAIAQKSQRHKVKLAGIIANRVDYEYGGGTSLLDQFAEKVGTKVIGRVPYHDLIRRSRLAGKTLFEMEGPGKEECTRPFEEMAEYLLAQPQATIPNPYHDRAIFEAIGGWR.

ATP-binding positions include 12–17 (GIGKST) and lysine 41. Serine 16 is a Mg(2+) binding site. Cysteine 97 and cysteine 131 together coordinate [4Fe-4S] cluster. Residue 182–183 (NR) participates in ATP binding.

Belongs to the NifH/BchL/ChlL family. Homodimer. Protochlorophyllide reductase is composed of three subunits; BchL, BchN and BchB. [4Fe-4S] cluster serves as cofactor.

It catalyses the reaction chlorophyllide a + oxidized 2[4Fe-4S]-[ferredoxin] + 2 ADP + 2 phosphate = protochlorophyllide a + reduced 2[4Fe-4S]-[ferredoxin] + 2 ATP + 2 H2O. It functions in the pathway porphyrin-containing compound metabolism; bacteriochlorophyll biosynthesis (light-independent). In terms of biological role, component of the dark-operative protochlorophyllide reductase (DPOR) that uses Mg-ATP and reduced ferredoxin to reduce ring D of protochlorophyllide (Pchlide) to form chlorophyllide a (Chlide). This reaction is light-independent. The L component serves as a unique electron donor to the NB-component of the complex, and binds Mg-ATP. The sequence is that of Light-independent protochlorophyllide reductase iron-sulfur ATP-binding protein from Chloroflexus aggregans (strain MD-66 / DSM 9485).